Consider the following 1011-residue polypeptide: Multiple C2 domain and transmembrane region protein 7 (1011 aa).

The C2 1 domain occupies 1 to 110 (MMMSNLKLGV…PHSDAVVLHF (110 aa)). Over residues 178-195 (QEHQHQHPQGPNQSSSLA) the composition is skewed to polar residues. The segment at 178 to 201 (QEHQHQHPQGPNQSSSLAAEQDNH) is disordered. C2 domains follow at residues 261–381 (IHKD…PQWY), 421–546 (VDCS…ARWY), and 587–709 (YSSD…THSY). The Ca(2+) site is built by Asp-294, Asp-300, Asp-347, Asp-349, and Asp-354. 3 helical membrane passes run 812–832 (MMTVFSGVIAVGKWFSDICSW), 846–866 (LMLVCLPELILPTMFLYMFLI), and 954–974 (IFVILCFIAAIVFFITPIQIV).

It belongs to the MCTP family. The cofactor is Ca(2+). Accumulates specifically in hydathodes. Restricted the basal meristem of roots. Observed in flowers.

Its subcellular location is the membrane. The protein localises to the vesicle. The protein resides in the endosome membrane. Functionally, may function as a signaling molecule by regulating the trafficking of other regulators. The sequence is that of Multiple C2 domain and transmembrane region protein 7 from Arabidopsis thaliana (Mouse-ear cress).